A 349-amino-acid chain; its full sequence is Transcription repressor OFP5 (349 aa).

Disordered regions lie at residues 1-20, 29-94, and 143-183; these read MMRWGRKKPVSSSSSSGLSR, KLSG…KESN, and KQRC…GYSR. The segment covering 10 to 20 has biased composition (low complexity); it reads VSSSSSSGLSR. Basic and acidic residues predominate over residues 37–48; sequence KPAKEKKQDEKA. Positions 49–62 are enriched in polar residues; that stretch reads SQNISVKTSLSSTT. Basic and acidic residues-rich tracts occupy residues 63–94 and 143–167; these read RRSDIHENSKRFQRVSVEKENSATRSADKESN and KQRCERRDQRLLEQKPKRSEQDAGV. The 60-residue stretch at 286-345 folds into the OVATE domain; sequence VVKCSSDPQKDFRDSMIEMIMENGINHPEELKELLVCYLRLNTDEYHDMIISVFQQVHND.

In terms of assembly, interacts with BLH1, BLH2, BLH3, BLH4, BLH6 and BLH10. In terms of tissue distribution, expressed in roots, rosette and cauline leaves, and flower buds.

It localises to the nucleus. Its function is as follows. Transcriptional repressor that regulates multiple aspects of plant growth and development through the regulation of BEL1-LIKE (BLH) and KNOX TALE (KNAT) homeodomain transcription factors. Required for embryo development. This Arabidopsis thaliana (Mouse-ear cress) protein is Transcription repressor OFP5 (OFP5).